Here is a 238-residue protein sequence, read N- to C-terminus: Thrombin-like enzyme gyroxin B2.1 (238 aa).

The 229-residue stretch at 1-229 (VIGGDECNIN…HLDWIQNIIA (229 aa)) folds into the Peptidase S1 domain. 6 disulfides stabilise this stretch: cysteine 7–cysteine 141, cysteine 28–cysteine 44, cysteine 78–cysteine 236, cysteine 120–cysteine 190, cysteine 152–cysteine 169, and cysteine 180–cysteine 205. Residue histidine 43 is the Charge relay system of the active site. Residue asparagine 81 is glycosylated (N-linked (GlcNAc...) asparagine). Aspartate 88 functions as the Charge relay system in the catalytic mechanism. Serine 184 functions as the Charge relay system in the catalytic mechanism.

Belongs to the peptidase S1 family. Snake venom subfamily. In terms of assembly, monomer. As to expression, expressed by the venom gland.

The protein resides in the secreted. Thrombin-like snake venom serine protease. Displays a specificity similar to trypsin. Releases only fibrinopeptide A in the conversion of fibrinogen (FGA) to fibrin. Shows coagulant, esterase and amidase activities. Reversibly increases the permeability of the blood brain barrier (BBB) in mice. Induces the barrel rotation syndrome in mice, which is manifested by gyroxin-like, rapid rolling motions. This syndrome may be due to its effect on BBB permeability, and certainly also to other actions affecting endogenous substrates present in the endothelium, nervous tissues or blood. The polypeptide is Thrombin-like enzyme gyroxin B2.1 (Crotalus durissus terrificus (South American rattlesnake)).